We begin with the raw amino-acid sequence, 59 residues long: Large ribosomal subunit protein bL32 (59 aa).

Residues 1-23 (MAVQQNKKSPSKRGMHRSHDFLT) form a disordered region.

The protein belongs to the bacterial ribosomal protein bL32 family.

The chain is Large ribosomal subunit protein bL32 from Burkholderia multivorans (strain ATCC 17616 / 249).